Consider the following 262-residue polypeptide: Phosphonates import ATP-binding protein PhnC (262 aa).

One can recognise an ABC transporter domain in the interval 5 to 253 (IRVEKLAKTF…RFDHLYRSIN (249 aa)). Residue 37 to 44 (GPSGSGKS) participates in ATP binding.

This sequence belongs to the ABC transporter superfamily. Phosphonates importer (TC 3.A.1.9.1) family. As to quaternary structure, the complex is composed of two ATP-binding proteins (PhnC), two transmembrane proteins (PhnE) and a solute-binding protein (PhnD).

The protein localises to the cell inner membrane. The enzyme catalyses phosphonate(out) + ATP + H2O = phosphonate(in) + ADP + phosphate + H(+). Part of the ABC transporter complex PhnCDE involved in phosphonates import. Responsible for energy coupling to the transport system. This Shigella boydii serotype 4 (strain Sb227) protein is Phosphonates import ATP-binding protein PhnC.